Reading from the N-terminus, the 64-residue chain is SPbeta prophage-derived uncharacterized protein YosJ (64 aa).

In Bacillus subtilis (strain 168), this protein is SPbeta prophage-derived uncharacterized protein YosJ (yosJ).